Here is a 513-residue protein sequence, read N- to C-terminus: Histidine ammonia-lyase (513 aa).

Positions 142–144 (ASG) form a cross-link, 5-imidazolinone (Ala-Gly). Position 143 is a 2,3-didehydroalanine (Ser) (S143).

The protein belongs to the PAL/histidase family. Post-translationally, contains an active site 4-methylidene-imidazol-5-one (MIO), which is formed autocatalytically by cyclization and dehydration of residues Ala-Ser-Gly.

The protein resides in the cytoplasm. It carries out the reaction L-histidine = trans-urocanate + NH4(+). It functions in the pathway amino-acid degradation; L-histidine degradation into L-glutamate; N-formimidoyl-L-glutamate from L-histidine: step 1/3. The sequence is that of Histidine ammonia-lyase from Hyphomonas neptunium (strain ATCC 15444).